A 145-amino-acid chain; its full sequence is Small ribosomal subunit protein eS19 (145 aa).

The residue at position 23 (Lys-23) is an N6-acetyllysine. The residue at position 67 (Arg-67) is an Omega-N-methylarginine. N6-acetyllysine is present on residues Lys-111 and Lys-115. The residue at position 143 (Lys-143) is an N6-succinyllysine.

This sequence belongs to the eukaryotic ribosomal protein eS19 family. As to quaternary structure, component of the small ribosomal subunit. Part of the small subunit (SSU) processome, composed of more than 70 proteins and the RNA chaperone small nucleolar RNA (snoRNA) U3. Interacts with RPS19BP1.

The protein resides in the cytoplasm. It is found in the nucleus. Its subcellular location is the nucleolus. In terms of biological role, component of the small ribosomal subunit. The ribosome is a large ribonucleoprotein complex responsible for the synthesis of proteins in the cell. Required for pre-rRNA processing and maturation of 40S ribosomal subunits. Part of the small subunit (SSU) processome, first precursor of the small eukaryotic ribosomal subunit. During the assembly of the SSU processome in the nucleolus, many ribosome biogenesis factors, an RNA chaperone and ribosomal proteins associate with the nascent pre-rRNA and work in concert to generate RNA folding, modifications, rearrangements and cleavage as well as targeted degradation of pre-ribosomal RNA by the RNA exosome. This chain is Small ribosomal subunit protein eS19 (Rps19), found in Rattus norvegicus (Rat).